Consider the following 296-residue polypeptide: MGPTASGKTALAIELVKQYDCEIISVDSALIYKDMDIGTAKPDAAEQAAAPHRLIDIIDPAQSYSAADFRRDALAQIEDILSRGKTPLLVGGTMMYFKALLEGLSPLPGADEAIREQIAAEAEAQGWQALHDQLREIDPVSAERIHPNDPQRLARALEVYRVSGQTLTELTKTKSDVFPYDVVQFAIAPSDRKVLHRAIETRFKAMLAQGFTSEVERLKARTDLNLDLPSMRCVGYRQCWQYLDGEIDYDTMVEKAIVATRQLAKRQLTWLRGWPDLIWLESGAENNLATVMRHSR.

2 to 9 (GPTASGKT) serves as a coordination point for ATP. Position 4-9 (4-9 (TASGKT)) interacts with substrate. Interaction with substrate tRNA regions lie at residues 27–30 (DSAL), 151–155 (QRLAR), and 232–237 (RCVGYR).

The protein belongs to the IPP transferase family. Monomer. It depends on Mg(2+) as a cofactor.

It catalyses the reaction adenosine(37) in tRNA + dimethylallyl diphosphate = N(6)-dimethylallyladenosine(37) in tRNA + diphosphate. Catalyzes the transfer of a dimethylallyl group onto the adenine at position 37 in tRNAs that read codons beginning with uridine, leading to the formation of N6-(dimethylallyl)adenosine (i(6)A). The polypeptide is tRNA dimethylallyltransferase (Shewanella pealeana (strain ATCC 700345 / ANG-SQ1)).